Consider the following 170-residue polypeptide: Aspartate 1-decarboxylase (170 aa).

Catalysis depends on Ser25, which acts as the Schiff-base intermediate with substrate; via pyruvic acid. Pyruvic acid (Ser) is present on Ser25. Thr57 contacts substrate. Tyr58 serves as the catalytic Proton donor. Residue 73 to 75 (GAA) coordinates substrate. Residues 118–170 (GHDPAEALPDDPSSLRGDLAVPGNPVTAAARRGTPTHQAPVALPASRTVVAPR) form a disordered region.

The protein belongs to the PanD family. As to quaternary structure, heterooctamer of four alpha and four beta subunits. It depends on pyruvate as a cofactor. Is synthesized initially as an inactive proenzyme, which is activated by self-cleavage at a specific serine bond to produce a beta-subunit with a hydroxyl group at its C-terminus and an alpha-subunit with a pyruvoyl group at its N-terminus.

The protein resides in the cytoplasm. It carries out the reaction L-aspartate + H(+) = beta-alanine + CO2. It functions in the pathway cofactor biosynthesis; (R)-pantothenate biosynthesis; beta-alanine from L-aspartate: step 1/1. Catalyzes the pyruvoyl-dependent decarboxylation of aspartate to produce beta-alanine. The sequence is that of Aspartate 1-decarboxylase from Frankia alni (strain DSM 45986 / CECT 9034 / ACN14a).